A 299-amino-acid chain; its full sequence is Taste receptor type 2 member 5 (299 aa).

Methionine 1 is a topological domain (extracellular). A helical membrane pass occupies residues 2–22 (LSAGLGLLMLVAVIEFLIGLI). The Cytoplasmic portion of the chain corresponds to 23-45 (GNGILVVWSLREWIRKFSWSSYN). The helical transmembrane segment at 46-66 (LIILGLAGCRFLLQWLIILDL) threads the bilayer. Topologically, residues 67–82 (SLFPLFQSSSWLRYLN) are extracellular. Residues 83 to 103 (VFWVLVSQASLWFATFLSVFY) traverse the membrane as a helical segment. The Cytoplasmic portion of the chain corresponds to 104 to 127 (CKKITTFDRPAYLWLKQRAYNLSL). The helical transmembrane segment at 128-148 (WCLLGYFIISLLLTVQVGLTV) threads the bilayer. The Extracellular portion of the chain corresponds to 149–175 (HHPPQGNSSIRYPFEHWQYLYVFQLNS). Residue asparagine 155 is glycosylated (N-linked (GlcNAc...) asparagine). A helical transmembrane segment spans residues 176–196 (GSYLPLMVFLVSSGMLIISLY). Residues 197-223 (THHKKMKVHSAGRRDARAKAHITALKS) are Cytoplasmic-facing. A helical membrane pass occupies residues 224–244 (LGCFLLLHLVYIVASPFSITS). Topologically, residues 245 to 253 (KTYPPDLTS) are extracellular. Residues 254–274 (VFIWETLMAAYPSLHSLMLIM) form a helical membrane-spanning segment. Residues 275–299 (GIPRVKQTCQKILWKTVCARRCWGP) lie on the Cytoplasmic side of the membrane.

The protein belongs to the G-protein coupled receptor T2R family.

The protein resides in the membrane. Functionally, receptor that may play a role in the perception of bitterness and is gustducin-linked. May play a role in sensing the chemical composition of the gastrointestinal content. The activity of this receptor may stimulate alpha gustducin, mediate PLC-beta-2 activation and lead to the gating of TRPM5. This chain is Taste receptor type 2 member 5 (TAS2R5), found in Papio hamadryas (Hamadryas baboon).